A 277-amino-acid polypeptide reads, in one-letter code: Shikimate dehydrogenase (NADP(+)) (277 aa).

Shikimate-binding positions include 15–17 (SLS) and Thr-62. Lys-66 functions as the Proton acceptor in the catalytic mechanism. Residues Asn-87 and Asp-102 each coordinate shikimate. Residues 127 to 131 (GAGGA), 151 to 156 (NRTVDK), and Ile-219 contribute to the NADP(+) site. Position 221 (Tyr-221) interacts with shikimate. Gly-242 provides a ligand contact to NADP(+).

The protein belongs to the shikimate dehydrogenase family. Homodimer.

The enzyme catalyses shikimate + NADP(+) = 3-dehydroshikimate + NADPH + H(+). It functions in the pathway metabolic intermediate biosynthesis; chorismate biosynthesis; chorismate from D-erythrose 4-phosphate and phosphoenolpyruvate: step 4/7. Involved in the biosynthesis of the chorismate, which leads to the biosynthesis of aromatic amino acids. Catalyzes the reversible NADPH linked reduction of 3-dehydroshikimate (DHSA) to yield shikimate (SA). This Bacillus cereus (strain ATCC 10987 / NRS 248) protein is Shikimate dehydrogenase (NADP(+)).